A 483-amino-acid chain; its full sequence is Protein disulfide-isomerase 5-3 (483 aa).

N-linked (GlcNAc...) asparagine glycosylation is found at Asn-53, Asn-74, and Asn-99. The Thioredoxin domain occupies 133–263 (EETKEEFPDG…IVKMVEGLVA (131 aa)). The Nucleophile role is filled by Cys-170. N-linked (GlcNAc...) asparagine glycosylation is found at Asn-279, Asn-326, and Asn-376. Residues 442 to 462 (FSHFITNLCAIIGGVFTVAGI) form a helical membrane-spanning segment.

It belongs to the protein disulfide isomerase family. As to expression, widely expressed.

Its subcellular location is the membrane. Functionally, acts as a protein-folding catalyst that interacts with nascent polypeptides to catalyze the formation, isomerization, and reduction or oxidation of disulfide bonds. In Arabidopsis thaliana (Mouse-ear cress), this protein is Protein disulfide-isomerase 5-3 (PDIL5-3).